Consider the following 276-residue polypeptide: Putative ABC transporter ATP-binding protein MA_4021 (276 aa).

The region spanning F5 to L247 is the ABC transporter domain. G38–S45 lines the ATP pocket.

The protein belongs to the ABC transporter superfamily.

The protein resides in the cell membrane. In terms of biological role, probably part of an ABC transporter complex. Responsible for energy coupling to the transport system. The chain is Putative ABC transporter ATP-binding protein MA_4021 from Methanosarcina acetivorans (strain ATCC 35395 / DSM 2834 / JCM 12185 / C2A).